A 321-amino-acid polypeptide reads, in one-letter code: Olfactory receptor 3A3 (321 aa).

Residues 1–34 (MSLQKLMEPEAGTNRTAVAEFILLGLVQTEEMQP) lie on the Extracellular side of the membrane. A glycan (N-linked (GlcNAc...) asparagine) is linked at N14. The helical transmembrane segment at 35 to 58 (VVFVLLLFAYLVTTGGNLSILAAV) threads the bilayer. Residues 59-66 (LVEPKLHA) are Cytoplasmic-facing. The helical transmembrane segment at 67-88 (PMYFFLGNLSVLDVGCITVTVP) threads the bilayer. The Extracellular segment spans residues 89-109 (AMLGRLLSHKSTISYDACLSQ). C106 and C198 form a disulfide bridge. A helical transmembrane segment spans residues 110–129 (LFFFHLLAGMDCFLLTAMAY). At 130–149 (DRLLAICQPLTYSTRMSQTV) the chain is on the cytoplasmic side. The helical transmembrane segment at 150–167 (QRMLVAASWACAFTNALT) threads the bilayer. Topologically, residues 168–205 (HTVAMSTLNFCGPNEVNHFYCDLPQLFQLSCSSTQLNE) are extracellular. The helical transmembrane segment at 206 to 228 (LLLFVAAAFMAVAPLVFISVSYA) threads the bilayer. Residues 229–245 (HVVAAVLQIRSAEGRKK) are Cytoplasmic-facing. A helical membrane pass occupies residues 246 to 268 (AFSTCGSHLTVVGIFYGTGVFSY). At 269-281 (MRLGSVESSDKDK) the chain is on the extracellular side. A helical membrane pass occupies residues 282–301 (GVGVFMTVINPMLNPLIYSL). The Cytoplasmic portion of the chain corresponds to 302–321 (RNTDVQGALCQLLVGKRSLT).

The protein belongs to the G-protein coupled receptor 1 family.

Its subcellular location is the cell membrane. Odorant receptor. The protein is Olfactory receptor 3A3 (OR3A3) of Homo sapiens (Human).